A 201-amino-acid polypeptide reads, in one-letter code: Large ribosomal subunit protein uL4 (201 aa).

The interval K44–G66 is disordered. Over residues G55 to G66 the composition is skewed to basic residues.

Belongs to the universal ribosomal protein uL4 family. As to quaternary structure, part of the 50S ribosomal subunit.

Its function is as follows. One of the primary rRNA binding proteins, this protein initially binds near the 5'-end of the 23S rRNA. It is important during the early stages of 50S assembly. It makes multiple contacts with different domains of the 23S rRNA in the assembled 50S subunit and ribosome. In terms of biological role, forms part of the polypeptide exit tunnel. This Alteromonas mediterranea (strain DSM 17117 / CIP 110805 / LMG 28347 / Deep ecotype) protein is Large ribosomal subunit protein uL4.